Reading from the N-terminus, the 932-residue chain is MTTGFLQKIFGSRNQRLVKQYQKTVAAINALETQIEKLTDDQLRGKTDEFRQRVAAGESLDKLLPEAFAVCREASRRVLKMRHFDVQLIGGMVLHYGKIAEMRTGEGKTLVATLPVYLNALSGRGVHVVTVNDYLAQRDAEWMARLYNFLGLSVGINLSGMEHDQKQQAYAADITYGTNNEFGFDYLRDNMVYETGARVQRALNFAVVDEVDSILIDEARTPLIISGQAEDHTELYVRMNALPPLLERQIGEEKADGTGVEKPGDYTLDEKSRQVFLTESGHEKAERLLAEWGLIGEGESLYAPQNITLMHHVYAALRAHTLFHKDQHYVVQNGEVVIVDEFTGRLMAGRRWSDGLHQAVEAKEHVKIQSENQTLASITFQNYFRMYAKLAGMTGTADTEAYEFNEIYGLETVVIPTNRPPKRIDKQDQIYKTAKERYDAVIRDIRDCYERGQPVLVGTTSIENSELLSHLLKQAGLPHEVLNAKQHEREAAIVAEAGRPRAITIATNMAGRGTDIVLGGNVEKQAAFIEADESIPADEKARRIQQLHDEWESLHEQVKAAGGLHIIGTERHESRRIDNQLRGRAGRQGDPGSSRFYLSLDDPLLRIFAGDRVRAIMDRLKMPEGEAIEAGIVTRSIESAQRKVEARNFDIRKQLLEYDDVANDQRKVIYQQRNELLEAHDITETITAMRHSVIADVVRQFVPEGSIEEQWDVPELEEALRNDWQLDLAIQEMVNESSSITADEILDAVTTAADEQYEAKVALVGRESFSAFERSVMLQTVDRLWREHLAALDHLRQGIHLRGYAQKNPKQEYKREAFELFAAMLEAIKQEVTRIVMNVQIQSPEQLEEAAEQIEERSSHLENVEYQHAEFAEAGAPAAGGAAVAAATATADMVGSAMAHSGPGGEMPKVGRNDPCPCGSGKKYKHCHGKLS.

Residues glutamine 87, 105–109 (GEGKT), and aspartate 515 each bind ATP. Cysteine 916, cysteine 918, cysteine 927, and histidine 928 together coordinate Zn(2+).

This sequence belongs to the SecA family. In terms of assembly, monomer and homodimer. Part of the essential Sec protein translocation apparatus which comprises SecA, SecYEG and auxiliary proteins SecDF-YajC and YidC. The cofactor is Zn(2+).

Its subcellular location is the cell inner membrane. It localises to the cytoplasm. It catalyses the reaction ATP + H2O + cellular proteinSide 1 = ADP + phosphate + cellular proteinSide 2.. Part of the Sec protein translocase complex. Interacts with the SecYEG preprotein conducting channel. Has a central role in coupling the hydrolysis of ATP to the transfer of proteins into and across the cell membrane, serving both as a receptor for the preprotein-SecB complex and as an ATP-driven molecular motor driving the stepwise translocation of polypeptide chains across the membrane. This Burkholderia multivorans (strain ATCC 17616 / 249) protein is Protein translocase subunit SecA.